The primary structure comprises 178 residues: ATP synthase subunit delta (178 aa).

This sequence belongs to the ATPase delta chain family. F-type ATPases have 2 components, F(1) - the catalytic core - and F(0) - the membrane proton channel. F(1) has five subunits: alpha(3), beta(3), gamma(1), delta(1), epsilon(1). F(0) has three main subunits: a(1), b(2) and c(10-14). The alpha and beta chains form an alternating ring which encloses part of the gamma chain. F(1) is attached to F(0) by a central stalk formed by the gamma and epsilon chains, while a peripheral stalk is formed by the delta and b chains.

It is found in the cell inner membrane. F(1)F(0) ATP synthase produces ATP from ADP in the presence of a proton or sodium gradient. F-type ATPases consist of two structural domains, F(1) containing the extramembraneous catalytic core and F(0) containing the membrane proton channel, linked together by a central stalk and a peripheral stalk. During catalysis, ATP synthesis in the catalytic domain of F(1) is coupled via a rotary mechanism of the central stalk subunits to proton translocation. In terms of biological role, this protein is part of the stalk that links CF(0) to CF(1). It either transmits conformational changes from CF(0) to CF(1) or is implicated in proton conduction. This Teredinibacter turnerae (strain ATCC 39867 / T7901) protein is ATP synthase subunit delta.